Here is a 408-residue protein sequence, read N- to C-terminus: LL-diaminopimelate aminotransferase (408 aa).

Residues Tyr-15 and Gly-42 each contribute to the substrate site. Residues Tyr-72, 108-109 (SK), Tyr-132, Asn-187, Tyr-218, and 246-248 (SFS) each bind pyridoxal 5'-phosphate. Substrate contacts are provided by Lys-109, Tyr-132, and Asn-187. Lys-249 carries the post-translational modification N6-(pyridoxal phosphate)lysine. Arg-257 and Asn-292 together coordinate pyridoxal 5'-phosphate. Substrate contacts are provided by Asn-292 and Arg-388.

The protein belongs to the class-I pyridoxal-phosphate-dependent aminotransferase family. LL-diaminopimelate aminotransferase subfamily. As to quaternary structure, homodimer. Pyridoxal 5'-phosphate serves as cofactor.

The enzyme catalyses (2S,6S)-2,6-diaminopimelate + 2-oxoglutarate = (S)-2,3,4,5-tetrahydrodipicolinate + L-glutamate + H2O + H(+). The protein operates within amino-acid biosynthesis; L-lysine biosynthesis via DAP pathway; LL-2,6-diaminopimelate from (S)-tetrahydrodipicolinate (aminotransferase route): step 1/1. Functionally, involved in the synthesis of meso-diaminopimelate (m-DAP or DL-DAP), required for both lysine and peptidoglycan biosynthesis. Catalyzes the direct conversion of tetrahydrodipicolinate to LL-diaminopimelate. The chain is LL-diaminopimelate aminotransferase from Prochlorococcus marinus (strain MIT 9303).